A 136-amino-acid polypeptide reads, in one-letter code: Secreted RxLR effector protein 15 (136 aa).

The N-terminal stretch at Met-1 to Ala-22 is a signal peptide. The RxLR signature appears at Arg-47–Arg-50.

The protein belongs to the RxLR effector family.

It localises to the secreted. The protein resides in the host nucleus. The protein localises to the host cytoplasm. Functionally, effector that completely suppresses the host cell death induced by cell death-inducing proteins. The protein is Secreted RxLR effector protein 15 of Plasmopara viticola (Downy mildew of grapevine).